The primary structure comprises 472 residues: Fumarate hydratase class II (472 aa).

The tract at residues 1 to 20 (MSPHENPSVETRTESDTFGP) is disordered. Substrate is bound by residues 105–107 (SGT), 136–139 (HPND), 146–148 (SSN), and T194. Positions 127-149 (GKRGGKSPVHPNDHCNRGQSSND) are disordered. H195 functions as the Proton donor/acceptor in the catalytic mechanism. Residue S325 is part of the active site. Substrate is bound by residues S326 and 331–333 (KVN).

Belongs to the class-II fumarase/aspartase family. Fumarase subfamily. As to quaternary structure, homotetramer.

Its subcellular location is the cytoplasm. It carries out the reaction (S)-malate = fumarate + H2O. Its pathway is carbohydrate metabolism; tricarboxylic acid cycle; (S)-malate from fumarate: step 1/1. Functionally, involved in the TCA cycle. Catalyzes the stereospecific interconversion of fumarate to L-malate. The polypeptide is Fumarate hydratase class II (Methylorubrum extorquens (strain ATCC 14718 / DSM 1338 / JCM 2805 / NCIMB 9133 / AM1) (Methylobacterium extorquens)).